Reading from the N-terminus, the 348-residue chain is Phosphate acyltransferase (348 aa).

Belongs to the PlsX family. Homodimer. Probably interacts with PlsY.

It is found in the cytoplasm. The catalysed reaction is a fatty acyl-[ACP] + phosphate = an acyl phosphate + holo-[ACP]. The protein operates within lipid metabolism; phospholipid metabolism. In terms of biological role, catalyzes the reversible formation of acyl-phosphate (acyl-PO(4)) from acyl-[acyl-carrier-protein] (acyl-ACP). This enzyme utilizes acyl-ACP as fatty acyl donor, but not acyl-CoA. This chain is Phosphate acyltransferase, found in Leuconostoc citreum (strain KM20).